A 137-amino-acid chain; its full sequence is Nucleoside diphosphate kinase (137 aa).

ATP contacts are provided by lysine 10, phenylalanine 59, arginine 87, threonine 93, arginine 104, and asparagine 114. Histidine 117 serves as the catalytic Pros-phosphohistidine intermediate.

Belongs to the NDK family. As to quaternary structure, homotetramer. The cofactor is Mg(2+).

The protein resides in the cytoplasm. The catalysed reaction is a 2'-deoxyribonucleoside 5'-diphosphate + ATP = a 2'-deoxyribonucleoside 5'-triphosphate + ADP. The enzyme catalyses a ribonucleoside 5'-diphosphate + ATP = a ribonucleoside 5'-triphosphate + ADP. Major role in the synthesis of nucleoside triphosphates other than ATP. The ATP gamma phosphate is transferred to the NDP beta phosphate via a ping-pong mechanism, using a phosphorylated active-site intermediate. The polypeptide is Nucleoside diphosphate kinase (Streptomyces avermitilis (strain ATCC 31267 / DSM 46492 / JCM 5070 / NBRC 14893 / NCIMB 12804 / NRRL 8165 / MA-4680)).